The primary structure comprises 410 residues: Mating-type locus allele B1 protein (410 aa).

Residues 1-110 (MSSDPNFSLI…FNVVSPDVGC (110 aa)) are variable domain between B alleles. Positions 107–184 (DVGCRNLSED…NARRRSGWSH (78 aa)) form a DNA-binding region, homeobox; TALE-type. A highly conserved between B alleles region spans residues 111 to 410 (RNLSEDLPAY…PFLCLSVAFV (300 aa)). Disordered stretches follow at residues 202-239 (RAKLSSSNQSTPPSSTSDSLSNNLDDVLSDNLGRPLTP), 278-335 (TPKP…TPEL), and 374-395 (ARGNRKVKALPKRAGKQQPDEV). A compositionally biased stretch (low complexity) spans 205–233 (LSSSNQSTPPSSTSDSLSNNLDDVLSDNL). The Nuclear localization signal motif lies at 276–308 (KKTPKPGMPRPVTTVAKRHPARKTKPAAKPKSR). The span at 291–307 (AKRHPARKTKPAAKPKS) shows a compositional bias: basic residues. Polar residues predominate over residues 312–335 (PRASTTPSIDSTLDSSKLESTPEL). A not essential for B1 function region spans residues 333–410 (PELSMCSTAD…PFLCLSVAFV (78 aa)). The span at 375–388 (RGNRKVKALPKRAG) shows a compositional bias: basic residues.

It belongs to the TALE/M-ATYP homeobox family.

Its subcellular location is the nucleus. The B locus has at least 25 alleles, and any combination of two different B alleles yields a multimeric regulatory protein, that activates genes responsible for the pathogenicity and for the sexual development of the fungus within the corn plant. This is Mating-type locus allele B1 protein from Mycosarcoma maydis (Corn smut fungus).